The primary structure comprises 215 residues: MEEGPAVGTLSREVSTEEAEPLGAAWSGDSGHVSQSHSSASGPWDDDGPEDAPGRDLPLLRRAASGYASSLLPSAGPRPEVEALDASLEELLAKVDEFVGMLDMIRGDSSHVVGEGVPRIHAKAAEMRRIYGRIDKLEAFVRMIGSSVARMEEQVAKAEAELGTFPRAFRRLLHTISVPALFRSAPSGPQRAAYEPPVLFRTEDHFPGCGDRPQL.

The disordered stretch occupies residues 1–57 (MEEGPAVGTLSREVSTEEAEPLGAAWSGDSGHVSQSHSSASGPWDDDGPEDAPGRDL). Residues 27-42 (SGDSGHVSQSHSSASG) show a composition bias toward low complexity. 2 coiled-coil regions span residues 80–97 (EVEA…KVDE) and 134–165 (IDKL…LGTF). A Phosphothreonine modification is found at Thr-164.

The protein belongs to the BLOC1S4 family. In terms of assembly, octamer composed of one copy each BLOC1S1, BLOC1S2, BLOC1S3, BLOC1S4, BLOC1S5, BLOC1S6, DTNBP1/BLOC1S7 and SNAPIN/BLOC1S8. Component of the biogenesis of lysosome-related organelles complex 1 (BLOC-1) composed of BLOC1S1, BLOC1S2, BLOC1S3, BLOC1S4, BLOC1S5, BLOC1S6, DTNBP1/BLOC1S7 and SNAPIN/BLOC1S8. The BLOC-1 complex associates with the AP-3 protein complex and membrane protein cargos. Interacts with BLOC1S5 and BLOC1S6. In terms of tissue distribution, widely expressed.

The protein resides in the cytoplasm. Its function is as follows. Component of the BLOC-1 complex, a complex that is required for normal biogenesis of lysosome-related organelles (LRO), such as platelet dense granules and melanosomes. In concert with the AP-3 complex, the BLOC-1 complex is required to target membrane protein cargos into vesicles assembled at cell bodies for delivery into neurites and nerve terminals. The BLOC-1 complex, in association with SNARE proteins, is also proposed to be involved in neurite extension. Plays a role in intracellular vesicle trafficking. This chain is Biogenesis of lysosome-related organelles complex 1 subunit 4 (Bloc1s4), found in Mus musculus (Mouse).